The chain runs to 507 residues: Tabersonine/lochnericine 19-hydroxylase (507 aa).

Residues 8–28 (FFVLLLPFFIGIAFIYKLWNF) form a helical membrane-spanning segment. Asparagine 167 is a glycosylation site (N-linked (GlcNAc...) asparagine). Cysteine 447 contributes to the heme binding site.

Belongs to the cytochrome P450 family. Heme is required as a cofactor. In terms of tissue distribution, confined to roots.

Its subcellular location is the endoplasmic reticulum membrane. It catalyses the reaction (-)-tabersonine + reduced [NADPH--hemoprotein reductase] + O2 = (-)-(R)-19-hydroxytabersonine + oxidized [NADPH--hemoprotein reductase] + H2O + H(+). It carries out the reaction lochnericine + reduced [NADPH--hemoprotein reductase] + O2 = horhammericine + oxidized [NADPH--hemoprotein reductase] + H2O + H(+). The catalysed reaction is (-)-vincadifformine + reduced [NADPH--hemoprotein reductase] + O2 = (-)-minovincinine + oxidized [NADPH--hemoprotein reductase] + H2O + H(+). Its pathway is alkaloid biosynthesis. Functionally, component of the monoterpenoid indole alkaloids (MIAs, e.g. echitovenine, tabersonine, lochnericine, 19-hydroxytabersonine and horhammericine) biosynthetic pathway; MIAs are used in cancer treatment and other medical applications. Cytochrome P450 catalyzing the conversion of (-)-tabersonine to 19-hydroxytabersonine, of lochnericine to horhammericine and of (-)-vincadifformine to (-)-minovincinine. The protein is Tabersonine/lochnericine 19-hydroxylase of Catharanthus roseus (Madagascar periwinkle).